We begin with the raw amino-acid sequence, 89 residues long: MCLLKLPVVLIVLLVALHHLKATPIESNQVEKRKCNTATCATQRLANFLIRSSNNLGAILSPTNVGSNTYGKRSTVDILNREPLNYLPF.

The signal sequence occupies residues 1–22 (MCLLKLPVVLIVLLVALHHLKA). The propeptide occupies 23-31 (TPIESNQVE). An intrachain disulfide couples Cys35 to Cys40. Tyr70 carries the tyrosine amide modification. A propeptide spanning residues 74 to 89 (STVDILNREPLNYLPF) is cleaved from the precursor.

Belongs to the calcitonin family. In terms of assembly, can form homodimers. Interacts with IDE and INS. Interaction with INS inhibits homodimerization and fibril formation.

The protein localises to the secreted. Amylin/IAPP is a glucoregulatory peptide hormone that plays an important role in the regulation of energy homeostasis. Selectively inhibits insulin-stimulated glucose utilization and glycogen deposition in muscle, while not affecting adipocyte glucose metabolism. IAPP function is mediated by the CALCR-RAMPs (AMYRs) receptor complexes. Amylin can also bind CALCR receptor in the absence of RAMPs, although it is more selective for AMYRs. This is Islet amyloid polypeptide (IAPP) from Felis catus (Cat).